The sequence spans 419 residues: L-rhamnose isomerase (419 aa).

Mn(2+) contacts are provided by His-262, Asp-294, and Asp-296.

The protein belongs to the rhamnose isomerase family. In terms of assembly, homotetramer. It depends on Mn(2+) as a cofactor.

Its subcellular location is the cytoplasm. The catalysed reaction is L-rhamnopyranose = L-rhamnulose. It participates in carbohydrate degradation; L-rhamnose degradation; glycerone phosphate from L-rhamnose: step 1/3. In terms of biological role, catalyzes the interconversion of L-rhamnose and L-rhamnulose. This chain is L-rhamnose isomerase, found in Escherichia coli O81 (strain ED1a).